A 263-amino-acid chain; its full sequence is S-methyl-5'-thioadenosine phosphorylase (263 aa).

Phosphate contacts are provided by residues Thr13, 55 to 56, and 88 to 89; these read RH and SA. Met186 contributes to the substrate binding site. Thr187 lines the phosphate pocket. Residue 210-212 coordinates substrate; sequence DYD.

This sequence belongs to the PNP/MTAP phosphorylase family. MTAP subfamily. As to quaternary structure, homohexamer. Dimer of a homotrimer.

The enzyme catalyses S-methyl-5'-thioadenosine + phosphate = 5-(methylsulfanyl)-alpha-D-ribose 1-phosphate + adenine. It participates in amino-acid biosynthesis; L-methionine biosynthesis via salvage pathway; S-methyl-5-thio-alpha-D-ribose 1-phosphate from S-methyl-5'-thioadenosine (phosphorylase route): step 1/1. Its function is as follows. Catalyzes the reversible phosphorylation of S-methyl-5'-thioadenosine (MTA) to adenine and 5-methylthioribose-1-phosphate. Involved in the breakdown of MTA, a major by-product of polyamine biosynthesis. Responsible for the first step in the methionine salvage pathway after MTA has been generated from S-adenosylmethionine. Has broad substrate specificity with 6-aminopurine nucleosides as preferred substrates. The polypeptide is S-methyl-5'-thioadenosine phosphorylase (Nitrosopumilus maritimus (strain SCM1)).